A 793-amino-acid polypeptide reads, in one-letter code: Ferredoxin/F(420)H(2)-dependent CoB-CoM heterodisulfide reductase subunit A (793 aa).

147-170 (GGGVAGIEAALNLAEAGFPVTMVE) serves as a coordination point for FAD. 4Fe-4S ferredoxin-type domains are found at residues 233 to 264 (RKPRFVLEDKCKGCVDLCSGVCPVEIENPMNY), 282 to 311 (QVVLIDPDHCVGCGLCQLACPAEAVDYEQK), 571 to 600 (MGAHVDPDKCIGCRTCVEVCKFGKISIENK), and 601 to 629 (KAVVDEVSCYGCGDCSAACPVGAIQMRNF). [4Fe-4S] cluster-binding residues include Cys243, Cys246, Cys250, Cys254, Cys291, Cys294, Cys297, Cys301, Cys580, Cys583, Cys586, Cys590, Cys609, Cys612, Cys615, and Cys619.

This sequence belongs to the HdrA family. In terms of assembly, the ferredoxin/F(420)H(2)-dependent CoB-CoM heterodisulfide reductase is composed of three subunits; HdrA2, HdrB2 and HdrC2. The cofactor is [4Fe-4S] cluster. [2Fe-2S] cluster serves as cofactor. Requires FAD as cofactor.

It localises to the cytoplasm. It catalyses the reaction coenzyme B + coenzyme M + 2 oxidized [2Fe-2S]-[ferredoxin] = coenzyme M-coenzyme B heterodisulfide + 2 reduced [2Fe-2S]-[ferredoxin] + 2 H(+). It carries out the reaction coenzyme B + 2 oxidized coenzyme F420-(gamma-L-Glu)(n) + coenzyme M + 2 reduced [2Fe-2S]-[ferredoxin] + 4 H(+) = coenzyme M-coenzyme B heterodisulfide + 2 reduced coenzyme F420-(gamma-L-Glu)(n) + 2 oxidized [2Fe-2S]-[ferredoxin]. It participates in cofactor metabolism; coenzyme M-coenzyme B heterodisulfide reduction; coenzyme B and coenzyme M from coenzyme M-coenzyme B heterodisulfide: step 1/1. Functionally, part of a complex that catalyzes the reversible reduction of CoM-S-S-CoB to the thiol-coenzymes H-S-CoM (coenzyme M) and H-S-CoB (coenzyme B). Catalyzes the transfer of electrons from ferredoxin to CoM-S-S-CoB during methanogenesis from acetate. Electrons transfer from ferredoxin to CoM-S-S-CoB via HdrA2, HdrC2 and HdrB2. In addition, the complex can use electron bifurcation to direct electron pairs from reduced coenzyme F420 towards the reduction of both ferredoxin and CoB-CoM heterodisulfide. This activity may take place during Fe(III)-dependent anaerobic methane oxidation. This Methanosarcina acetivorans (strain ATCC 35395 / DSM 2834 / JCM 12185 / C2A) protein is Ferredoxin/F(420)H(2)-dependent CoB-CoM heterodisulfide reductase subunit A.